Consider the following 277-residue polypeptide: Proteasome subunit beta type-7 (277 aa).

The propeptide at 1-43 is removed in mature form; that stretch reads MAAVSVFQPPVGGFSFDNCRRNAVLEADFAKKGFKLPKARKTG. The active-site Nucleophile is the Thr44.

It belongs to the peptidase T1B family. The 26S proteasome consists of a 20S proteasome core and two 19S regulatory subunits. The 20S proteasome core is a barrel-shaped complex made of 28 subunits that are arranged in four stacked rings. The two outer rings are each formed by seven alpha subunits, and the two inner rings are formed by seven beta subunits. The proteolytic activity is exerted by three beta-subunits PSMB5, PSMB6 and PSMB7.

The protein localises to the cytoplasm. It localises to the nucleus. It carries out the reaction Cleavage of peptide bonds with very broad specificity.. Functionally, component of the 20S core proteasome complex involved in the proteolytic degradation of most intracellular proteins. This complex plays numerous essential roles within the cell by associating with different regulatory particles. Associated with two 19S regulatory particles, forms the 26S proteasome and thus participates in the ATP-dependent degradation of ubiquitinated proteins. The 26S proteasome plays a key role in the maintenance of protein homeostasis by removing misfolded or damaged proteins that could impair cellular functions, and by removing proteins whose functions are no longer required. Associated with the PA200 or PA28, the 20S proteasome mediates ubiquitin-independent protein degradation. This type of proteolysis is required in several pathways including spermatogenesis (20S-PA200 complex) or generation of a subset of MHC class I-presented antigenic peptides (20S-PA28 complex). Within the 20S core complex, PSMB7 displays a trypsin-like activity. This is Proteasome subunit beta type-7 (Psmb7) from Mus musculus (Mouse).